Reading from the N-terminus, the 3023-residue chain is Genome polyprotein (3023 aa).

The segment covering 1-21 has biased composition (basic residues); it reads MSTLPKPKRQTKRNTLRRPKN. Residue Ser2 is modified to N-acetylserine; by host. Positions 2-23 are interaction with STAT1; that stretch reads STLPKPKRQTKRNTLRRPKNVK. The interaction with EIF2AK2/PKR stretch occupies residues 2 to 58; it reads STLPKPKRQTKRNTLRRPKNVKFPAGGQIVGEVYVLPRRGPQLGVREVRKTSERSQP. The interaction with DDX3X stretch occupies residues 2 to 59; the sequence is STLPKPKRQTKRNTLRRPKNVKFPAGGQIVGEVYVLPRRGPQLGVREVRKTSERSQPR. Positions 2-75 are disordered; the sequence is STLPKPKRQT…PKARPREGRS (74 aa). Over 2–168 the chain is Cytoplasmic; it reads STLPKPKRQT…EDGVNYATGN (167 aa). 2 short sequence motifs (nuclear localization signal) span residues 5–13 and 38–43; these read PKPKRQTKR and PRRGPQ. The span at 47 to 57 shows a compositional bias: basic and acidic residues; sequence REVRKTSERSQ. Ser53 is modified (phosphoserine; by host). 2 short sequence motifs (nuclear localization signal) span residues 58–64 and 66–71; these read PRGRRQP and PKARPR. The segment at 112-152 is important for endoplasmic reticulum and mitochondrial localization; the sequence is PRRRSRNLGKVIDTLTCGFADLMGYIPLIGAPVGGVARALA. At Ser116 the chain carries Phosphoserine; by host. An interaction with APOA2 region spans residues 122–173; sequence VIDTLTCGFADLMGYIPLIGAPVGGVARALAHGVRALEDGVNYATGNLPGCS. The interval 164–167 is important for lipid droplets localization; that stretch reads YATG. Residues 169–189 form a helical membrane-spanning segment; the sequence is LPGCSFSIFLLALFSCLTCPA. Residues 178–191 constitute a propeptide, ER anchor for the core protein, removed in mature form by host signal peptidase; it reads LLALFSCLTCPASS. At 190-359 the chain is on the lumenal side; it reads SSLEYRNASG…VGAHWGVMAG (170 aa). N-linked (GlcNAc...) asparagine; by host glycans are attached at residues Asn196, Asn209, and Asn235. The segment at 266-297 is important for fusion; sequence LVAPPTLCSALYVEDAFGAVSLVGQAFTFRPR. The N-linked (GlcNAc...) asparagine; by host glycan is linked to Asn306. The chain crosses the membrane as a helical span at residues 360–380; it reads LAYFSMQGNWAKVVIVLIMFS. Over 381–733 the chain is Lumenal; that stretch reads GVDATTHTTG…WEFVVLVFLL (353 aa). Residues 386–413 form an HVR1 region; that stretch reads THTTGGSAAQATAGFTSFFTRGPSQNLQ. Residues Asn418, Asn424, and Asn431 are each glycosylated (N-linked (GlcNAc...) (high mannose) asparagine; by host). 4 cysteine pairs are disulfide-bonded: Cys430/Cys554, Cys453/Cys460, Cys488/Cys496, and Cys505/Cys510. Residue Asn449 is glycosylated (N-linked (GlcNAc...) asparagine; by host). The tract at residues 476–480 is HVR2; sequence ANING. Asn477 is a glycosylation site (N-linked (GlcNAc...) asparagine; by host). Residues 482 to 495 form a CD81-binding 1 region; the sequence is SEDRPYCWHYPPRP. Residue Asn534 is glycosylated (N-linked (GlcNAc...) asparagine; by host). Residues 546-553 form a CD81-binding 2 region; that stretch reads PPQGRWFG. Asn558 carries N-linked (GlcNAc...) asparagine; by host glycosylation. 4 cysteine pairs are disulfide-bonded: Cys566–Cys571, Cys589–Cys593, Cys605–Cys628, and Cys615–Cys652. N-linked (GlcNAc...) (high mannose) asparagine; by host glycans are attached at residues Asn631 and Asn653. A disulfide bridge connects residues Cys660 and Cys685. The segment at 668-679 is PKR/eIF2-alpha phosphorylation homology domain (PePHD); it reads SEQQPLLHSTTD. Residues 734-754 traverse the membrane as a helical segment; sequence LADARVCVALWMMLLISQAEA. At 755–765 the chain is on the lumenal side; that stretch reads AMENLVMLNAL. The chain crosses the membrane as a helical span at residues 766-786; that stretch reads SAAGQQGYVWYLVAFCAAWHI. Residues 787-790 are Cytoplasmic-facing; it reads RGKL. A helical membrane pass occupies residues 791-811; that stretch reads VPLITYGLTGLWPLALLDLLL. Topologically, residues 812 to 821 are lumenal; that stretch reads PQRAYAWTGE. A helical membrane pass occupies residues 822–842; sequence DDATIGAGVLLLLGFFTLSPW. At 843 to 889 the chain is on the cytoplasmic side; the sequence is YKHWIGRLIWWNQYAICRGEAALQVWVPPLLVRGSRDSVILLASLLY. A helical transmembrane segment spans residues 890–910; it reads PSLIFDITKLLIAVLGPLYLI. Residues 907–1034 form the Peptidase C18 domain; that stretch reads LYLIQAALTS…DYKKMGWRLL (128 aa). Over 911–936 the chain is Lumenal; sequence QAALTSTPYFVRAHVLIRICMLVRSA. The protease NS2-3 stretch occupies residues 912–1214; sequence AALTSTPYFV…PVETLSTQVR (303 aa). A lipid anchor (S-palmitoyl cysteine; by host) is attached at Cys930. Residues 937–957 traverse the membrane as a helical segment; that stretch reads MGGKYVQMAVLTVGRWFNTYL. The interval 937–957 is interaction with host SCPS1; the sequence is MGGKYVQMAVLTVGRWFNTYL. Residues 958–1665 are Cytoplasmic-facing; the sequence is YDHLSPIQDW…CMSADLEVTT (708 aa). Residues His960, Glu980, and Cys1001 each act as for protease NS2 activity; shared with dimeric partner in the active site. Residues 1035-1216 enclose the Peptidase S29 domain; that stretch reads SPISAYAQQT…ETLSTQVRSP (182 aa). Active-site charge relay system; for serine protease NS3 activity residues include His1091 and Asp1115. Zn(2+)-binding residues include Cys1131 and Cys1133. The Charge relay system; for serine protease NS3 activity role is filled by Ser1173. Cys1179 and His1183 together coordinate Zn(2+). The 153-residue stretch at 1225–1377 folds into the Helicase ATP-binding domain; that stretch reads PAVPESYQVG…PNIEEVGLTS (153 aa). 1238–1245 lines the ATP pocket; sequence APTGSGKS. Residues Ser1245 and Glu1325 each coordinate Mg(2+). A DECH box motif is present at residues 1324-1327; it reads DECH. The region spanning 1387–1546 is the Helicase C-terminal domain; sequence ALPLAMIKGG…DLQPAETTVR (160 aa). Positions 1494 to 1506 are RNA-binding; it reads QRRGRTGRGRPGI. Residues 1666-1686 traverse the membrane as a helical segment; sequence SAWVLVGGVLAALAAYCLSVG. The tract at residues 1687 to 1698 is NS3-binding; that stretch reads CVVIVGHIELGG. The Cytoplasmic portion of the chain corresponds to 1687-1813; the sequence is CVVIVGHIEL…SVTSPLTTNQ (127 aa). The chain crosses the membrane as a helical span at residues 1814–1834; it reads TMFFNILGGWVATHLAGPAAS. The Lumenal segment spans residues 1835-1836; the sequence is SA. A helical membrane pass occupies residues 1837-1857; that stretch reads FVVSGLAGAAVGGIGIGRVLL. Residue Asp1858 is a topological domain, cytoplasmic. The helical transmembrane segment at 1859–1879 threads the bilayer; it reads VLAGYGAGVSGALVAFKIMGG. The Lumenal segment spans residues 1880–1889; that stretch reads ELPTTEDMVN. A helical transmembrane segment spans residues 1890-1910; that stretch reads LLPAILSPGALVVGVICAAVL. Topologically, residues 1911-1980 are cytoplasmic; the sequence is RRHVGPGEGA…WINEDYPSPC (70 aa). The S-palmitoyl cysteine; by host moiety is linked to residue Cys1980. An intramembrane segment occupies 1981–2010; sequence NGDWLHDIWDWVCIVLSDFKTWLSAKIMPK. At 2011 to 3002 the chain is on the cytoplasmic side; it reads VPGIPFLSCQ…YHSVSRARTR (992 aa). Residues Cys2019, Cys2037, Cys2039, and Cys2060 each coordinate Zn(2+). The segment at 2128 to 2216 is FKBP8-binding; it reads EFFTELDGVR…ASSSASQLSA (89 aa). The transcriptional activation stretch occupies residues 2128–2340; it reads EFFTELDGVR…PVPPPRRKRT (213 aa). Positions 2143 to 2147 are interaction with non-structural protein 4A; it reads PPCKP. The segment covering 2195–2218 has biased composition (low complexity); the sequence is ARRLARGSPPSEASSSASQLSAPS. The segment at 2195–2226 is disordered; that stretch reads ARRLARGSPPSEASSSASQLSAPSLKATCQTH. Residues 2197–2450 are interaction with host SKP2; sequence RLARGSPPSE…AIITPCSAEE (254 aa). Phosphoserine; by host is present on residues Ser2202, Ser2205, Ser2209, Ser2212, Ser2215, and Ser2218. Residues 2218–2257 form an ISDR region; the sequence is SLKATCQTHRPHPDAELIDANLLWRQEMGSNITRVESETK. An interaction with EIF2AK2/PKR region spans residues 2218–2283; the sequence is SLKATCQTHR…TELSIPAECF (66 aa). The interval 2257–2314 is NS4B-binding; sequence KVVILDSFEPLRAEEDDTELSIPAECFKKPPKYPPALPIWARPDYNPPLLPSWKDPTY. The interval 2307-2385 is V3; the sequence is PSWKDPTYEP…GTESTAESGD (79 aa). 2 disordered regions span residues 2320–2344 and 2357–2422; these read HGCALPPTRPAPVPPPRRKRTIKLD and ERSF…STVS. An SH3-binding motif is present at residues 2330-2333; sequence APVP. The Nuclear localization signal signature appears at 2335-2343; sequence PRRKRTIKL. Over residues 2366–2384 the composition is skewed to low complexity; the sequence is EGTGTSSSGVGTESTAESG. 2 positions are modified to phosphoserine; by host: Ser2461 and Ser2474. The RdRp catalytic domain occupies 2646 to 2764; the sequence is PLGFSYDTRC…ISESCGVEED (119 aa). Residues Asp2652, Asp2750, and Asp2751 each contribute to the Mg(2+) site. A helical membrane pass occupies residues 3003 to 3023; that stretch reads HLLLCLLLLTVGVGIFLLPAR.

Belongs to the hepacivirus polyprotein family. Homooligomer. Interacts with E1 (via C-terminus). Interacts with the non-structural protein 5A. Interacts (via N-terminus) with host STAT1 (via SH2 domain); this interaction results in decreased STAT1 phosphorylation and ubiquitin-mediated proteasome-dependent STAT1 degradation, leading to decreased IFN-stimulated gene transcription. Interacts with host STAT3; this interaction constitutively activates STAT3. Interacts with host LTBR receptor. Interacts with host TNFRSF1A receptor and possibly induces apoptosis. Interacts with host HNRPK. Interacts with host YWHAE. Interacts with host UBE3A/E6AP. Interacts with host DDX3X. Interacts with host APOA2. Interacts with host RXRA protein. Interacts with host SP110 isoform 3/Sp110b; this interaction sequesters the transcriptional corepressor SP110 away from the nucleus. Interacts with host CREB3 nuclear transcription protein; this interaction triggers cell transformation. Interacts with host ACY3. Interacts with host C1QR1. Interacts with host RBM24; this interaction, which enhances the interaction of the mature core protein with 5'-UTR, may inhibit viral translation and favor replication. Interacts with host EIF2AK2/PKR; this interaction induces the autophosphorylation of EIF2AK2. Part of the viral assembly initiation complex composed of NS2, E1, E2, NS3, NS4A, NS5A and the mature core protein. As to quaternary structure, forms a heterodimer with envelope glycoprotein E2. Interacts with mature core protein. Interacts with protease NS2. The heterodimer E1/E2 interacts with host CLDN1; this interaction plays a role in viral entry into host cell. Interacts with host SPSB2 (via C-terminus). Part of the viral assembly initiation complex composed of NS2, E1, E2, NS3, NS4A, NS5A and the mature core protein. Interacts with host NEURL3; this interaction prevents E1 binding to glycoprotein E2. In terms of assembly, forms a heterodimer with envelope glycoprotein E1. Interacts with host CD81 and SCARB1 receptors; these interactions play a role in viral entry into host cell. Interacts with host EIF2AK2/PKR; this interaction inhibits EIF2AK2 and probably allows the virus to evade the innate immune response. Interacts with host CD209/DC-SIGN and CLEC4M/DC-SIGNR. Interact with host SPCS1; this interaction is essential for viral particle assembly. Interacts with protease NS2. The heterodimer E1/E2 interacts with host CLDN1; this interaction plays a role in viral entry into host cell. Part of the viral assembly initiation complex composed of NS2, E1, E2, NS3, NS4A, NS5A and the mature core protein. Interacts with host SLC3A2/4F2hc; the interaction may facilitate viral entry into host cell. Interacts with human PLSCR1. Homohexamer. Homoheptamer. Interacts with protease NS2. As to quaternary structure, homodimer. Interacts with host SPCS1; this interaction is essential for viral particle assembly. Interacts with envelope glycoprotein E1. Interacts with envelope glycoprotein E2. Interacts with viroporin p7. Interacts with serine protease/helicase NS3. Part of the replication complex composed of NS2, NS3, NS4A, NS4B, NS5A and the RNA-directed RNA polymerase embedded in an ER-derived membranous web. Part of the viral assembly initiation complex composed of NS2, E1, E2, NS3, NS4A, NS5A and the mature core protein. In terms of assembly, interacts with protease NS2. Interacts with non-structural protein 4A; this interaction stabilizes the folding of NS3 serine protease. NS3-NS4A interaction is essential for NS3 activation and allows membrane anchorage of the latter. NS3/NS4A complex also prevents phosphorylation of host IRF3, thus preventing the establishment of dsRNA induced antiviral state. Interacts with host MAVS; this interaction leads to the cleavage and inhibition of host MAVS. Interacts with host TICAM1; this interaction leads to the cleavage and inhibition of host TICAM1. Interacts with host TANK-binding kinase/TBK1; this interaction results in the inhibition of the association between TBK1 and IRF3, which leads to the inhibition of IRF3 activation. Interacts with host RBM24. Part of the replication complex composed of NS2, NS3, NS4A, NS4B, NS5A and the RNA-directed RNA polymerase embedded in an ER-derived membranous web. Part of the viral assembly initiation complex composed of NS2, E1, E2, NS3, NS4A, NS5A and the mature core protein. Interacts with NS3 serine protease; this interaction stabilizes the folding of NS3 serine protease. NS3-NS4A interaction is essential for NS3 activation and allows membrane anchorage of the latter. Interacts with non-structural protein 5A (via N-terminus). Part of the replication complex composed of NS2, NS3, NS4A, NS4B, NS5A and the RNA-directed RNA polymerase embedded in an ER-derived membranous web. Part of the viral assembly initiation complex composed of NS2, E1, E2, NS3, NS4A, NS5A and the mature core protein. As to quaternary structure, homomultimer. Interacts with non-structural protein NS5A. Interacts with host PLA2G4C; this interaction likely initiates the recruitment of replication complexes to lipid droplets. Interacts with host STING; this interaction disrupts the interaction between STING and TBK1 thereby suppressing the interferon signaling. Part of the replication complex composed of NS2, NS3, NS4A, NS4B, NS5A and the RNA-directed RNA polymerase embedded in an ER-derived membranous web. In terms of assembly, monomer. Homodimer; dimerization is required for RNA-binding. Interacts with the mature core protein. Interacts (via N-terminus) with non-structural protein 4A. Interacts with non-structural protein 4B. Interacts (via region D2) with RNA-directed RNA polymerase. Part of the viral assembly initiation complex composed of NS2, E1, E2, NS3, NS4A, NS5A and the mature core protein. Part of the replication complex composed of NS2, NS3, NS4A, NS4B, NS5A and the RNA-directed RNA polymerase embedded in an ER-derived membranous web. Interacts with host GRB2. Interacts with host BIN1. Interacts with host PIK3R1. Interacts with host SRCAP. Interacts with host FKBP8. Interacts (via C-terminus) with host VAPB (via MSP domain). Interacts with host EIF2AK2/PKR; this interaction leads to disruption of EIF2AK2 dimerization by NS5A and probably allows the virus to evade the innate immune response. Interacts (via N-terminus) with host PACSIN2 (via N-terminus); this interaction attenuates protein kinase C alpha-mediated phosphorylation of PACSIN2 by disrupting the interaction between PACSIN2 and PRKCA. Interacts (via N-terminus) with host SRC kinase (via SH2 domain). Interacts with most Src-family kinases. Interacts with host IFI27 and SKP2; promotes the ubiquitin-mediated proteasomal degradation of NS5A. Interacts with host GPS2. Interacts with host TNFRSF21; this interaction allows the modulation by the virus of JNK, p38 MAPK, STAT3, and Akt signaling pathways in a DR6-dependent manner. Interacts (via N-terminus) with host CIDEB (via N-terminus); this interaction seems to regulate the association of HCV particles with APOE. Interacts with host CHKA/Choline Kinase-alpha; CHKA bridges host PI4KA and NS5A and potentiates NS5A-stimulated PI4KA activity, which then facilitates the targeting of the ternary complex to the ER for viral replication. Interacts with host SPSB2 (via C-terminus); this interaction targets NS5A for ubiquitination and degradation. Interacts with host RAB18; this interaction may promote the association of NS5A and other replicase components with lipid droplets. Interacts (via region D2) with host PPIA/CYPA; the interaction stimulates RNA-binding ability of NS5A and is dependent on the peptidyl-prolyl cis-trans isomerase activity of PPIA/CYPA. Interacts with host TRIM14; this interaction induces the degradation of NS5A. Homooligomer. Interacts with non-structural protein 5A. Interacts with host VAPB. Interacts with host PRK2/PKN2. Interacts with host HNRNPA1 and SEPT6; these interactions facilitate viral replication. Part of the replication complex composed of NS2, NS3, NS4A, NS4B, NS5A and the RNA-directed RNA polymerase. Zn(2+) serves as cofactor. The cofactor is Mg(2+). Specific enzymatic cleavages in vivo yield mature proteins. The structural proteins, core, E1, E2 and p7 are produced by proteolytic processing by host signal peptidases. The core protein precursor is synthesized as a 23 kDa, which is retained in the ER membrane through the hydrophobic signal peptide. Cleavage by the signal peptidase releases the 21 kDa mature core protein. The cleavage of the core protein precursor occurs between aminoacids 176 and 188 but the exact cleavage site is not known. Some degraded forms of the core protein appear as well during the course of infection. The other proteins (p7, NS2, NS3, NS4A, NS4B, NS5A and NS5B) are cleaved by the viral proteases. Autoprocessing between NS2 and NS3 is mediated by the NS2 cysteine protease catalytic domain and regulated by the NS3 N-terminal domain. In terms of processing, phosphorylated by host PKC and PKA. Post-translationally, ubiquitinated; mediated by UBE3A and leading to core protein subsequent proteasomal degradation. Highly N-glycosylated. In terms of processing, palmitoylation is required for NS2/3 autoprocessing and E2 recruitment to membranes. Post-translationally, palmitoylated. This modification may play a role in its polymerization or in protein-protein interactions. Phosphorylated on serines in a basal form termed p56. p58 is a hyperphosphorylated form of p56. p56 and p58 coexist in the cell in roughly equivalent amounts. Hyperphosphorylation is dependent on the presence of NS4A. Host CSNK1A1/CKI-alpha or RPS6KB1 kinases may be responsible for NS5A phosphorylation. In terms of processing, tyrosine phosphorylation is essential for the interaction with host SRC. Post-translationally, the N-terminus is phosphorylated by host PRK2/PKN2.

It is found in the host endoplasmic reticulum membrane. The protein localises to the host mitochondrion membrane. Its subcellular location is the virion. The protein resides in the host cytoplasm. It localises to the host nucleus. It is found in the host lipid droplet. The protein localises to the virion membrane. Its subcellular location is the host mitochondrion. The protein resides in the host cell membrane. It localises to the host perinuclear region. The enzyme catalyses Hydrolysis of four peptide bonds in the viral precursor polyprotein, commonly with Asp or Glu in the P6 position, Cys or Thr in P1 and Ser or Ala in P1'.. It catalyses the reaction a ribonucleoside 5'-triphosphate + H2O = a ribonucleoside 5'-diphosphate + phosphate + H(+). It carries out the reaction ATP + H2O = ADP + phosphate + H(+). The catalysed reaction is RNA(n) + a ribonucleoside 5'-triphosphate = RNA(n+1) + diphosphate. Inhibited by the antiviral drug hexamethylene amiloride. Inhibition by amantadine appears to be genotype-dependent. Also inhibited by long-alkyl-chain iminosugar derivatives. With respect to regulation, activity is up-regulated by PRK2/PKN2-mediated phosphorylation. Packages viral RNA to form a viral nucleocapsid, and promotes virion budding. Participates in the viral particle production as a result of its interaction with the non-structural protein 5A. Binds RNA and may function as a RNA chaperone to induce the RNA structural rearrangements taking place during virus replication. Modulates viral translation initiation by interacting with viral IRES and 40S ribosomal subunit. Affects various cell signaling pathways, host immunity and lipid metabolism. Prevents the establishment of cellular antiviral state by blocking the interferon-alpha/beta (IFN-alpha/beta) and IFN-gamma signaling pathways and by blocking the formation of phosphorylated STAT1 and promoting ubiquitin-mediated proteasome-dependent degradation of STAT1. Activates STAT3 leading to cellular transformation. Regulates the activity of cellular genes, including c-myc and c-fos. May repress the promoter of p53, and sequester CREB3 and SP110 isoform 3/Sp110b in the cytoplasm. Represses cell cycle negative regulating factor CDKN1A, thereby interrupting an important check point of normal cell cycle regulation. Targets transcription factors involved in the regulation of inflammatory responses and in the immune response: suppresses TNF-induced NF-kappa-B activation, and activates AP-1. Binds to dendritic cells (DCs) via C1QR1, resulting in down-regulation of T-lymphocytes proliferation. Alters lipid metabolism by interacting with hepatocellular proteins involved in lipid accumulation and storage. Induces up-regulation of FAS promoter activity, and thereby contributes to the increased triglyceride accumulation in hepatocytes (steatosis). Functionally, forms a heterodimer with envelope glycoprotein E2, which mediates virus attachment to the host cell, virion internalization through clathrin-dependent endocytosis and fusion with host membrane. Fusion with the host cell is most likely mediated by both E1 and E2, through conformational rearrangements of the heterodimer required for fusion rather than a classical class II fusion mechanism. E1/E2 heterodimer binds host apolipoproteins such as APOB and ApoE thereby forming a lipo-viro-particle (LVP). APOE associated to the LVP allows the initial virus attachment to cell surface receptors such as the heparan sulfate proteoglycans (HSPGs), syndecan-1 (SDC1), syndecan-1 (SDC2), the low-density lipoprotein receptor (LDLR) and scavenger receptor class B type I (SCARB1). The cholesterol transfer activity of SCARB1 allows E2 exposure and binding of E2 to SCARB1 and the tetraspanin CD81. E1/E2 heterodimer binding on CD81 activates the epithelial growth factor receptor (EGFR) signaling pathway. Diffusion of the complex E1-E2-EGFR-SCARB1-CD81 to the cell lateral membrane allows further interaction with Claudin 1 (CLDN1) and occludin (OCLN) to finally trigger HCV entry. In terms of biological role, forms a heterodimer with envelope glycoprotein E1, which mediates virus attachment to the host cell, virion internalization through clathrin-dependent endocytosis and fusion with host membrane. Fusion with the host cell is most likely mediated by both E1 and E2, through conformational rearrangements of the heterodimer required for fusion rather than a classical class II fusion mechanism. The interaction between envelope glycoprotein E2 and host apolipoprotein E/APOE allows the proper assembly, maturation and infectivity of the viral particles. This interaction is probably promoted via the up-regulation of cellular autophagy by the virus. E1/E2 heterodimer binds host apolipoproteins such as APOB and APOE thereby forming a lipo-viro-particle (LVP). APOE associated to the LVP allows the initial virus attachment to cell surface receptors such as the heparan sulfate proteoglycans (HSPGs), syndecan-1 (SDC1), syndecan-1 (SDC2), the low-density lipoprotein receptor (LDLR) and scavenger receptor class B type I (SCARB1). The cholesterol transfer activity of SCARB1 allows E2 exposure and binding of E2 to SCARB1 and the tetraspanin CD81. E1/E2 heterodimer binding on CD81 activates the epithelial growth factor receptor (EGFR) signaling pathway. Diffusion of the complex E1-E2-EGFR-SCARB1-CD81 to the cell lateral membrane allows further interaction with Claudin 1 (CLDN1) and occludin (OCLN) to finally trigger HCV entry. Inhibits host EIF2AK2/PKR activation, preventing the establishment of an antiviral state. Viral ligand for CD209/DC-SIGN and CLEC4M/DC-SIGNR, which are respectively found on dendritic cells (DCs), and on liver sinusoidal endothelial cells and macrophage-like cells of lymph node sinuses. These interactions allow the capture of circulating HCV particles by these cells and subsequent facilitated transmission to permissive cells such as hepatocytes and lymphocyte subpopulations. The interaction between E2 and host amino acid transporter complex formed by SLC3A2 and SLC7A5/LAT1 may facilitate viral entry into host cell. Its function is as follows. Ion channel protein that acts as a viroporin and plays an essential role in the assembly, envelopment and secretion of viral particles. Regulates the host cell secretory pathway, which induces the intracellular retention of viral glycoproteins and favors assembly of viral particles. Creates a pore in acidic organelles and releases Ca(2+) and H(+) in the cytoplasm of infected cells, leading to a productive viral infection. High levels of cytoplasmic Ca(2+) may trigger membrane trafficking and transport of viral ER-associated proteins to viroplasms, sites of viral genome replication. This ionic imbalance induces the assembly of the inflammasome complex, which triggers the maturation of pro-IL-1beta into IL-1beta through the action of caspase-1. Targets also host mitochondria and induces mitochondrial depolarization. In addition of its role as a viroporin, acts as a lipid raft adhesion factor. Cysteine protease required for the proteolytic auto-cleavage between the non-structural proteins NS2 and NS3. The N-terminus of NS3 is required for the function of NS2 protease (active region NS2-3). Promotes the initiation of viral particle assembly by mediating the interaction between structural and non-structural proteins. Functionally, displays three enzymatic activities: serine protease with a chymotrypsin-like fold, NTPase and RNA helicase. NS3 serine protease, in association with NS4A, is responsible for the cleavages of NS3-NS4A, NS4A-NS4B, NS4B-NS5A and NS5A-NS5B. The NS3/NS4A complex prevents phosphorylation of host IRF3, thus preventing the establishment of dsRNA induced antiviral state. The NS3/NS4A complex induces host amino acid transporter component SLC3A2, thus contributing to HCV propagation. NS3 RNA helicase binds to RNA and unwinds both dsDNA and dsRNA in the 3' to 5' direction, and likely resolves RNA complicated stable secondary structures in the template strand. Binds a single ATP and catalyzes the unzipping of a single base pair of dsRNA. Inhibits host antiviral proteins TBK1 and IRF3 thereby preventing the establishment of an antiviral state. Cleaves host MAVS/CARDIF thereby preventing the establishment of an antiviral state. Cleaves host TICAM1/TRIF, thereby disrupting TLR3 signaling and preventing the establishment of an antiviral state. In terms of biological role, peptide cofactor which forms a non-covalent complex with the N-terminal of NS3 serine protease. The NS3/NS4A complex prevents phosphorylation of host IRF3, thus preventing the establishment of dsRNA induced antiviral state. The NS3/NS4A complex induces host amino acid transporter component SLC3A2, thus contributing to HCV propagation. Its function is as follows. Induces a specific membrane alteration that serves as a scaffold for the virus replication complex. This membrane alteration gives rise to the so-called ER-derived membranous web that contains the replication complex. NS4B self-interaction contributes to its function in membranous web formation. Promotes host TRIF protein degradation in a CASP8-dependent manner thereby inhibiting host TLR3-mediated interferon signaling. Disrupts the interaction between STING and TBK1 contributing to the inhibition of interferon signaling. Phosphorylated protein that is indispensable for viral replication and assembly. Both hypo- and hyperphosphorylated states are required for the viral life cycle. The hyperphosphorylated form of NS5A is an inhibitor of viral replication. Involved in RNA-binding and especially in binding to the viral genome. Zinc is essential for RNA-binding. Participates in the viral particle production as a result of its interaction with the mature viral core protein. Its interaction with host VAPB may target the viral replication complex to vesicles. Down-regulates viral IRES translation initiation. Mediates interferon resistance, presumably by interacting with and inhibiting host EIF2AK2/PKR. Prevents BIN1-induced apoptosis. Acts as a transcriptional activator of some host genes important for viral replication when localized in the nucleus. Via the interaction with host PACSIN2, modulates lipid droplet formation in order to promote virion assembly. Modulates TNFRSF21/DR6 signaling pathway for viral propagation. Functionally, RNA-dependent RNA polymerase that performs primer-template recognition and RNA synthesis during viral replication. Initiates RNA transcription/replication at a flavin adenine dinucleotide (FAD), resulting in a 5'- FAD cap on viral RNAs. In this way, recognition of viral 5' RNA by host pattern recognition receptors can be bypassed, thereby evading activation of antiviral pathways. The sequence is that of Genome polyprotein from Homo sapiens (Human).